The chain runs to 130 residues: Small ribosomal subunit protein uS8y (130 aa).

Belongs to the universal ribosomal protein uS8 family.

The polypeptide is Small ribosomal subunit protein uS8y (RPS15AC) (Arabidopsis thaliana (Mouse-ear cress)).